We begin with the raw amino-acid sequence, 312 residues long: Holliday junction branch migration complex subunit RuvB (312 aa).

The segment at 1-168 (MKTNNEFRPQ…FGHVFYLSEY (168 aa)) is large ATPase domain (RuvB-L). Residues R8, G49, K52, T53, T54, 115-117 (EDF), R158, Y168, and R206 each bind ATP. T53 is a binding site for Mg(2+). The segment at 169-234 (ETSEIAAIIL…NIKNIFEKIQ (66 aa)) is small ATPAse domain (RuvB-S). The tract at residues 237–312 (DFGLEEQDIN…EFLKNNQLIK (76 aa)) is head domain (RuvB-H). DNA contacts are provided by K290 and R295.

Belongs to the RuvB family. As to quaternary structure, homohexamer. Forms an RuvA(8)-RuvB(12)-Holliday junction (HJ) complex. HJ DNA is sandwiched between 2 RuvA tetramers; dsDNA enters through RuvA and exits via RuvB. An RuvB hexamer assembles on each DNA strand where it exits the tetramer. Each RuvB hexamer is contacted by two RuvA subunits (via domain III) on 2 adjacent RuvB subunits; this complex drives branch migration. In the full resolvosome a probable DNA-RuvA(4)-RuvB(12)-RuvC(2) complex forms which resolves the HJ.

The protein resides in the cytoplasm. It carries out the reaction ATP + H2O = ADP + phosphate + H(+). Its function is as follows. The RuvA-RuvB-RuvC complex processes Holliday junction (HJ) DNA during genetic recombination and DNA repair, while the RuvA-RuvB complex plays an important role in the rescue of blocked DNA replication forks via replication fork reversal (RFR). RuvA specifically binds to HJ cruciform DNA, conferring on it an open structure. The RuvB hexamer acts as an ATP-dependent pump, pulling dsDNA into and through the RuvAB complex. RuvB forms 2 homohexamers on either side of HJ DNA bound by 1 or 2 RuvA tetramers; 4 subunits per hexamer contact DNA at a time. Coordinated motions by a converter formed by DNA-disengaged RuvB subunits stimulates ATP hydrolysis and nucleotide exchange. Immobilization of the converter enables RuvB to convert the ATP-contained energy into a lever motion, pulling 2 nucleotides of DNA out of the RuvA tetramer per ATP hydrolyzed, thus driving DNA branch migration. The RuvB motors rotate together with the DNA substrate, which together with the progressing nucleotide cycle form the mechanistic basis for DNA recombination by continuous HJ branch migration. Branch migration allows RuvC to scan DNA until it finds its consensus sequence, where it cleaves and resolves cruciform DNA. The chain is Holliday junction branch migration complex subunit RuvB from Ureaplasma urealyticum serovar 10 (strain ATCC 33699 / Western).